Here is a 190-residue protein sequence, read N- to C-terminus: Segregation and condensation protein B (190 aa).

It belongs to the ScpB family. In terms of assembly, homodimer. Homodimerization may be required to stabilize the binding of ScpA to the Smc head domains. Component of a cohesin-like complex composed of ScpA, ScpB and the Smc homodimer, in which ScpA and ScpB bind to the head domain of Smc. The presence of the three proteins is required for the association of the complex with DNA.

The protein resides in the cytoplasm. In terms of biological role, participates in chromosomal partition during cell division. May act via the formation of a condensin-like complex containing Smc and ScpA that pull DNA away from mid-cell into both cell halves. This chain is Segregation and condensation protein B, found in Alkaliphilus metalliredigens (strain QYMF).